A 320-amino-acid chain; its full sequence is Probable L-ascorbate peroxidase 5, chloroplastic (320 aa).

A chloroplast-targeting transit peptide spans 1–42; it reads MAVVHRILRRGLSAASPLPSLRGLLLVSPQELGRRPASSSSS. Residue His-80 is the Proton acceptor of the active site. A heme b-binding site is contributed by His-209. Position 210 (Thr-210) interacts with K(+). The disordered stretch occupies residues 213–241; the sequence is RARPERSGWGKPETKYTENGPGAPGGQSW. Residues 214–228 show a composition bias toward basic and acidic residues; sequence ARPERSGWGKPETKY. Thr-242 and Asp-249 together coordinate K(+).

The protein belongs to the peroxidase family. Ascorbate peroxidase subfamily. The cofactor is heme b. As to expression, expressed in leaves, stems and flowers.

The protein resides in the plastid. Its subcellular location is the chloroplast stroma. It carries out the reaction L-ascorbate + H2O2 = L-dehydroascorbate + 2 H2O. In terms of biological role, plays a key role in hydrogen peroxide removal. The protein is Probable L-ascorbate peroxidase 5, chloroplastic of Oryza sativa subsp. japonica (Rice).